The primary structure comprises 453 residues: Phosphoglucosamine mutase (453 aa).

S102 acts as the Phosphoserine intermediate in catalysis. Mg(2+) is bound by residues S102, D243, D245, and D247. S102 bears the Phosphoserine mark.

This sequence belongs to the phosphohexose mutase family. Mg(2+) serves as cofactor. Activated by phosphorylation.

It carries out the reaction alpha-D-glucosamine 1-phosphate = D-glucosamine 6-phosphate. Catalyzes the conversion of glucosamine-6-phosphate to glucosamine-1-phosphate. In Bartonella tribocorum (strain CIP 105476 / IBS 506), this protein is Phosphoglucosamine mutase.